The primary structure comprises 290 residues: Fructose-1,6-bisphosphatase class 1 (290 aa).

Residues Glu78, Asp96, Leu98, and Asp99 each contribute to the Mg(2+) site. Substrate-binding positions include Asp99 to Ser102, Tyr201, and Lys226. Position 232 (Glu232) interacts with Mg(2+).

Belongs to the FBPase class 1 family. In terms of assembly, homotetramer. It depends on Mg(2+) as a cofactor.

It is found in the cytoplasm. It catalyses the reaction beta-D-fructose 1,6-bisphosphate + H2O = beta-D-fructose 6-phosphate + phosphate. The protein operates within carbohydrate biosynthesis; gluconeogenesis. In Helicobacter pylori (strain HPAG1), this protein is Fructose-1,6-bisphosphatase class 1.